A 112-amino-acid chain; its full sequence is MEKVLALLLVTLTVAYAVPDPRGIIINLDEGELCLNSAQCKSNCCQHDTILSLSRCALKARENSECSAFTLYGVYYKCPCERGLTCEGDKSLVGSITNTNFGICHDVGRSSD.

Positions 1 to 17 (MEKVLALLLVTLTVAYA) are cleaved as a signal peptide. Residues 18–22 (VPDPR) constitute a propeptide, enterostatin, activation peptide. Cystine bridges form between C34-C45, C40-C56, C44-C78, C66-C86, and C80-C104.

The protein belongs to the colipase family. In terms of assembly, forms a 1:1 stoichiometric complex with pancreatic lipase. Expressed by the pancreas.

It is found in the secreted. Its function is as follows. Colipase is a cofactor of pancreatic lipase. It allows the lipase to anchor itself to the lipid-water interface. Without colipase the enzyme is washed off by bile salts, which have an inhibitory effect on the lipase. In terms of biological role, enterostatin has a biological activity as a satiety signal. The protein is Colipase (CLPS) of Sus scrofa (Pig).